We begin with the raw amino-acid sequence, 309 residues long: tRNA pseudouridine synthase B (309 aa).

Asp51 (nucleophile) is an active-site residue.

This sequence belongs to the pseudouridine synthase TruB family. Type 1 subfamily.

It catalyses the reaction uridine(55) in tRNA = pseudouridine(55) in tRNA. Responsible for synthesis of pseudouridine from uracil-55 in the psi GC loop of transfer RNAs. This chain is tRNA pseudouridine synthase B, found in Coxiella burnetii (strain RSA 331 / Henzerling II).